Consider the following 193-residue polypeptide: Holliday junction branch migration complex subunit RuvA (193 aa).

The tract at residues 1–64 (MIGRIAGVLL…EDAHLLYGFG (64 aa)) is domain I. The interval 65-139 (TAEERSTFRE…GKIGADLGAM (75 aa)) is domain II. Residues 139-143 (MAGAA) are flexible linker. The interval 144 to 193 (SASDHASDILNALLALGYSEKEALAAVKNVPAGTGVSEGIKLALKALSKG) is domain III.

It belongs to the RuvA family. Homotetramer. Forms an RuvA(8)-RuvB(12)-Holliday junction (HJ) complex. HJ DNA is sandwiched between 2 RuvA tetramers; dsDNA enters through RuvA and exits via RuvB. An RuvB hexamer assembles on each DNA strand where it exits the tetramer. Each RuvB hexamer is contacted by two RuvA subunits (via domain III) on 2 adjacent RuvB subunits; this complex drives branch migration. In the full resolvosome a probable DNA-RuvA(4)-RuvB(12)-RuvC(2) complex forms which resolves the HJ.

It localises to the cytoplasm. Its function is as follows. The RuvA-RuvB-RuvC complex processes Holliday junction (HJ) DNA during genetic recombination and DNA repair, while the RuvA-RuvB complex plays an important role in the rescue of blocked DNA replication forks via replication fork reversal (RFR). RuvA specifically binds to HJ cruciform DNA, conferring on it an open structure. The RuvB hexamer acts as an ATP-dependent pump, pulling dsDNA into and through the RuvAB complex. HJ branch migration allows RuvC to scan DNA until it finds its consensus sequence, where it cleaves and resolves the cruciform DNA. In Paraburkholderia xenovorans (strain LB400), this protein is Holliday junction branch migration complex subunit RuvA.